The chain runs to 241 residues: Chaperone protein FimC (241 aa).

A signal peptide spans 1-36 (MSNKNVNVRKSQEITFCLLAGILMFMAMVVAGRAEA).

This sequence belongs to the periplasmic pilus chaperone family.

It localises to the periplasm. In terms of biological role, required for the biogenesis of type 1 fimbriae. Binds and interact with FimH. This chain is Chaperone protein FimC (fimC), found in Escherichia coli O6:H1 (strain CFT073 / ATCC 700928 / UPEC).